The primary structure comprises 169 residues: Putative outer membrane protein BBA03 (169 aa).

The protein localises to the cell outer membrane. The chain is Putative outer membrane protein BBA03 from Borreliella burgdorferi (strain ATCC 35210 / DSM 4680 / CIP 102532 / B31) (Borrelia burgdorferi).